We begin with the raw amino-acid sequence, 302 residues long: Large ribosomal subunit protein uL29m (302 aa).

A mitochondrion-targeting transit peptide spans 1–38; it reads MASSGAARPAASRVLQRCQPFSSSTSCAAPVTTWRTLA. Positions 255-302 are disordered; that stretch reads EPVADHLETPETSGQEKVGELSPAGAVDPSTILASKTGKPVTDAPRSS.

It belongs to the universal ribosomal protein uL29 family. As to quaternary structure, component of the mitochondrial large ribosomal subunit. Mature mitochondrial ribosomes consist of a small (37S) and a large (54S) subunit. The 37S subunit contains at least 33 different proteins and 1 molecule of RNA (15S). The 54S subunit contains at least 45 different proteins and 1 molecule of RNA (21S).

It localises to the mitochondrion. The chain is Large ribosomal subunit protein uL29m (MRPL4) from Pyricularia oryzae (strain 70-15 / ATCC MYA-4617 / FGSC 8958) (Rice blast fungus).